Here is a 372-residue protein sequence, read N- to C-terminus: Mannan endo-1,4-beta-mannosidase 8 (372 aa).

Residues tryptophan 57 and asparagine 172 each coordinate substrate. The Proton donor role is filled by glutamate 173. Position 253 (tyrosine 253) interacts with substrate. The active-site Nucleophile is the glutamate 293. Tryptophan 335 provides a ligand contact to substrate.

Belongs to the glycosyl hydrolase 5 (cellulase A) family. As to expression, expressed in stems and leaves and seeds.

The catalysed reaction is Random hydrolysis of (1-&gt;4)-beta-D-mannosidic linkages in mannans, galactomannans and glucomannans.. This Oryza sativa subsp. japonica (Rice) protein is Mannan endo-1,4-beta-mannosidase 8 (MAN8).